The sequence spans 185 residues: Nucleoside triphosphate pyrophosphatase (185 aa).

The active-site Proton acceptor is Asp-70.

It belongs to the Maf family. The cofactor is a divalent metal cation.

The protein localises to the cytoplasm. The enzyme catalyses a ribonucleoside 5'-triphosphate + H2O = a ribonucleoside 5'-phosphate + diphosphate + H(+). The catalysed reaction is a 2'-deoxyribonucleoside 5'-triphosphate + H2O = a 2'-deoxyribonucleoside 5'-phosphate + diphosphate + H(+). In terms of biological role, nucleoside triphosphate pyrophosphatase. May have a dual role in cell division arrest and in preventing the incorporation of modified nucleotides into cellular nucleic acids. In Nitratiruptor sp. (strain SB155-2), this protein is Nucleoside triphosphate pyrophosphatase.